Consider the following 403-residue polypeptide: Forkhead box protein Q1 (403 aa).

2 disordered regions span residues 1-75 (MKLE…PGAE) and 94-116 (GAAG…PYTR). Over residues 32–48 (LSAAGDDSLGSDGDCAA) the composition is skewed to low complexity. Positions 96–107 (AGPGAGGAGSGE) are enriched in gly residues. The fork-head DNA-binding region spans 119–214 (KPPYSYIALI…ADGVFRRRRK (96 aa)). Positions 216–266 (LSHRAPVPAPGLRPEEAPGLPAAPPPAPAAPASPRMRSPARQEERASPAGK) are disordered. The segment covering 236–246 (PAAPPPAPAAP) has biased composition (pro residues).

In terms of tissue distribution, expressed predominantly in the stomach, trachea, bladder and salivary gland.

The protein localises to the nucleus. In terms of biological role, plays a role in hair follicle differentiation. The chain is Forkhead box protein Q1 (FOXQ1) from Homo sapiens (Human).